The chain runs to 665 residues: Pentatricopeptide repeat-containing protein At3g02490, mitochondrial (665 aa).

The N-terminal 37 residues, 1 to 37 (MRYQWRSLLFRSYRSSPRPFLSHHSRFQVISNSTRSF), are a transit peptide targeting the mitochondrion. PPR repeat units follow at residues 280-314 (DEKT…GYEM), 315-349 (EMET…SISN), 352-388 (TPHC…GNVV), 389-423 (PDVM…GYVP), 424-458 (SGDL…GNHL), 459-493 (DDKA…EGVS), 495-530 (AGYA…QLKP), and 536-570 (KIMV…GFPP).

This sequence belongs to the PPR family. P subfamily.

The protein resides in the mitochondrion. The sequence is that of Pentatricopeptide repeat-containing protein At3g02490, mitochondrial from Arabidopsis thaliana (Mouse-ear cress).